We begin with the raw amino-acid sequence, 498 residues long: ATP synthase subunit beta, chloroplastic (498 aa).

172-179 is an ATP binding site; the sequence is GGAGVGKT.

This sequence belongs to the ATPase alpha/beta chains family. In terms of assembly, F-type ATPases have 2 components, CF(1) - the catalytic core - and CF(0) - the membrane proton channel. CF(1) has five subunits: alpha(3), beta(3), gamma(1), delta(1), epsilon(1). CF(0) has four main subunits: a(1), b(1), b'(1) and c(9-12).

It is found in the plastid. The protein resides in the chloroplast thylakoid membrane. The catalysed reaction is ATP + H2O + 4 H(+)(in) = ADP + phosphate + 5 H(+)(out). In terms of biological role, produces ATP from ADP in the presence of a proton gradient across the membrane. The catalytic sites are hosted primarily by the beta subunits. This is ATP synthase subunit beta, chloroplastic from Atropa belladonna (Belladonna).